The sequence spans 168 residues: GTP-dependent dephospho-CoA kinase (168 aa).

GTP is bound by residues Asp49, Val50, Val51, Asp68, Lys70, and Glu120.

This sequence belongs to the GTP-dependent DPCK family.

It catalyses the reaction 3'-dephospho-CoA + GTP = GDP + CoA + H(+). It functions in the pathway cofactor biosynthesis; coenzyme A biosynthesis. Catalyzes the GTP-dependent phosphorylation of the 3'-hydroxyl group of dephosphocoenzyme A to form coenzyme A (CoA). The protein is GTP-dependent dephospho-CoA kinase of Pyrobaculum neutrophilum (strain DSM 2338 / JCM 9278 / NBRC 100436 / V24Sta) (Thermoproteus neutrophilus).